We begin with the raw amino-acid sequence, 427 residues long: Probable purple acid phosphatase 20 (427 aa).

Positions 1–21 are cleaved as a signal peptide; it reads MVKVLGLVAILLIVLAGNVLS. Residue Asn-85 is glycosylated (N-linked (GlcNAc...) asparagine). Fe cation contacts are provided by Asp-147, Asp-174, and Tyr-177. Zn(2+) is bound at residue Asp-174. Residues Asn-207 and His-291 each coordinate Zn(2+). Residue Asn-207 coordinates substrate. His-301 (proton donor) is an active-site residue. His-330 contacts Zn(2+). 330-332 is a substrate binding site; it reads HVH. His-332 contributes to the Fe cation binding site. The N-linked (GlcNAc...) asparagine glycan is linked to Asn-392.

Belongs to the metallophosphoesterase superfamily. Purple acid phosphatase family. As to quaternary structure, homodimer. Requires Fe cation as cofactor. The cofactor is Zn(2+). Expressed flowers and siliques.

It is found in the secreted. It carries out the reaction a phosphate monoester + H2O = an alcohol + phosphate. This is Probable purple acid phosphatase 20 (PAP20) from Arabidopsis thaliana (Mouse-ear cress).